The sequence spans 1087 residues: MEEDNIVDSKEIENNVEDKKEETPSSSPSPSSSLQQQQEEGGVVKQAVSNLVSSSITLHDDAKLIQVTGKDEPFHFISVPMSVEFLNLEDVFIMQSDAYIFVWCSEQANIKKKAKAVQMAQKLKVEIGCQRAVQVLEIGEEHPTFLFCLGVPKGTKLNVTKEKNDIFQVDEDDEEQVLEPEFFLFKIFTGTDGKPSIKPMEEDEGINQEMLESSACFILDCEHEMYIWLGKGVKKSTKDTLIPVAKKIWTQYDRPEYYGKLKLQPIITWVFDGAESCLFKSKFSKWVEKAQPLQTSYLSLSSKKKEALNFDVSSMHQDKEVPVINIGAASDYSNGKLLVWCSGGGSGNKWNKVEEDDFGIFYSNKSYVCHFIYKPENKNSIRSVIFFWEGLYSNQRNYIGYKFGLYKEIQKKMEGLKSDDPVEYRISQNKEPQEFINLFGTELLVLNEELALKPMIFQVRANRGTQLFPDPDSCNAKLLNSLDSFVFLFPNKYIIVWHGKVSTEHQRELAADLFTFLPPEYEAGVKEFDQGKESDNFWKIIGGNSNDIVINTFINENKEEKEKEEEEKEEEEEEEEEEEEEEEEEKDNNKTTTIIKHLRPKKIKLFLCTDNSGIFKADQINPFSQVDLNSQECVLLDVYHKVFLWKGSKSTDQKLNDTQDLAKQYIETANDQRPSDCSVELVEQYNESPLFKSYFHSWKVTPPKVFIDPIISYKQKLAERLQKEKEDLEKLKQQQEQEQEQQQKENNKIVEEVKEEVKEEDVKEEVKEEEVKEEEVKEEEVKEVAKEETKEEIKEEVNDEATEVKEVNQVEEEVKEEEVKEEVKVEVKEEEVKGEAKEEEVKEEEVKEEEVKEEVKEVKEEVKEEVKQDKEEEVNEEIKEETKEEETKEDDNKEDEKVNEENETVNEENEVGIIVSPPSEKVDEANSSSTISSPENEGSVSVKDKRKSNEPITPSVVSSSGDLLFAYEPYHGPPIHSSNSPKQGRKGGRKSHGKNQPQHKKNHSVDQSPLSSPIIPNKSLNLDIDNQSFDLNSINNNNSVEVLDGASSPLSFSSSSINSNSTHNTPSKKNKNKNKKKHNRSSSLTHA.

The disordered stretch occupies residues 1 to 40; sequence MEEDNIVDSKEIENNVEDKKEETPSSSPSPSSSLQQQQEE. Residues 7 to 23 show a composition bias toward basic and acidic residues; that stretch reads VDSKEIENNVEDKKEET. The segment covering 24–40 has biased composition (low complexity); sequence PSSSPSPSSSLQQQQEE. 4 Gelsolin-like repeats span residues 73 to 146, 183 to 286, 335 to 442, and 465 to 538; these read PFHF…PTFL, FLFK…FSKW, GKLL…FGTE, and TQLF…DNFW. Residues 550 to 598 are a coiled coil; that stretch reads INTFINENKEEKEKEEEEKEEEEEEEEEEEEEEEEEKDNNKTTTIIKHL. The interval 555–592 is disordered; it reads NENKEEKEKEEEEKEEEEEEEEEEEEEEEEEKDNNKTT. Over residues 562 to 586 the composition is skewed to acidic residues; the sequence is EKEEEEKEEEEEEEEEEEEEEEEEK. The Gelsolin-like 5 repeat unit spans residues 614–692; it reads IFKADQINPF…EQYNESPLFK (79 aa). A coiled-coil region spans residues 710 to 912; that stretch reads IISYKQKLAE…ETVNEENEVG (203 aa). 4 stretches are compositionally biased toward basic and acidic residues: residues 732–770, 779–808, 817–840, and 849–900; these read KQQQEQEQEQQQKENNKIVEEVKEEVKEEDVKEEVKEEE, EEVKEVAKEETKEEIKEEVNDEATEVKEVN, EEVKEEVKVEVKEEEVKGEAKEEE, and EEVK…KVNE. The interval 732–1087 is disordered; the sequence is KQQQEQEQEQ…HNRSSSLTHA (356 aa). The span at 901 to 910 shows a compositional bias: acidic residues; it reads ENETVNEENE. Polar residues-rich tracts occupy residues 925-939 and 950-961; these read ANSSSTISSPENEGS and EPITPSVVSSSG. A compositionally biased stretch (basic residues) spans 983 to 1002; it reads QGRKGGRKSHGKNQPQHKKN. Polar residues predominate over residues 1018–1040; it reads KSLNLDIDNQSFDLNSINNNNSV. A compositionally biased stretch (low complexity) spans 1047 to 1065; the sequence is SSPLSFSSSSINSNSTHNT. Positions 1066–1080 are enriched in basic residues; the sequence is PSKKNKNKNKKKHNR.

This sequence belongs to the villin/gelsolin family. Interacts with rasD and abpC.

The protein resides in the cytoplasmic vesicle. Its function is as follows. Involved in phototaxis. Required for coupling photodetection to the locomotory machinery of slugs. May be essential in the natural environment for the propagation of spores. This chain is Gelsolin-related protein of 125 kDa (gnrA), found in Dictyostelium discoideum (Social amoeba).